A 237-amino-acid polypeptide reads, in one-letter code: Exosome complex component Rrp4 (237 aa).

The 73-residue stretch at 72–144 folds into the S1 motif domain; that stretch reads GHIVVGKVVD…LSKDPVLTIK (73 aa). A KH domain is found at 152–211; that stretch reads PRGTLVEIPPQKVPRVIGRRGSMVSMIEDLLGVKLIVGQNGRIVVVGDDPQRVEIAVLAV.

This sequence belongs to the RRP4 family. Component of the archaeal exosome complex. Forms a trimer of Rrp4 and/or Csl4 subunits. The trimer associates with a hexameric ring-like arrangement composed of 3 Rrp41-Rrp42 heterodimers.

Its subcellular location is the cytoplasm. Non-catalytic component of the exosome, which is a complex involved in RNA degradation. Increases the RNA binding and the efficiency of RNA degradation. Confers strong poly(A) specificity to the exosome. In Thermofilum pendens (strain DSM 2475 / Hrk 5), this protein is Exosome complex component Rrp4.